The following is a 152-amino-acid chain: Ribosome maturation factor RimP (152 aa).

Belongs to the RimP family.

It is found in the cytoplasm. Functionally, required for maturation of 30S ribosomal subunits. The chain is Ribosome maturation factor RimP from Sodalis glossinidius (strain morsitans).